Here is a 181-residue protein sequence, read N- to C-terminus: Proteinase inhibitor A (181 aa).

The first 24 residues, 1 to 24, serve as a signal peptide directing secretion; sequence MAASNALLLISGVLLISLAVLCHG. 3 disulfide bridges follow: cysteine 67–cysteine 113, cysteine 134–cysteine 143, and cysteine 136–cysteine 139.

The protein belongs to the protease inhibitor I3 (leguminous Kunitz-type inhibitor) family.

Its subcellular location is the secreted. In terms of biological role, possesses two reactive sites. Inhibits an equimolar amount of trypsin and chymotrypsin simultaneously, and inhibits kallikrein weakly. This Sagittaria sagittifolia (Arrowhead) protein is Proteinase inhibitor A.